Here is a 456-residue protein sequence, read N- to C-terminus: Glycine--tRNA ligase (456 aa).

R98 and E168 together coordinate substrate. ATP-binding positions include R200–E202, F210–F215, E285–L286, and G329–R332. F215–E219 is a substrate binding site. Residue E325–G329 coordinates substrate.

It belongs to the class-II aminoacyl-tRNA synthetase family. As to quaternary structure, homodimer.

The protein resides in the cytoplasm. The enzyme catalyses tRNA(Gly) + glycine + ATP = glycyl-tRNA(Gly) + AMP + diphosphate. In terms of biological role, catalyzes the attachment of glycine to tRNA(Gly). The chain is Glycine--tRNA ligase from Mycoplasma mycoides subsp. mycoides SC (strain CCUG 32753 / NCTC 10114 / PG1).